We begin with the raw amino-acid sequence, 148 residues long: Protein PLANT CADMIUM RESISTANCE 9 (148 aa).

The helical transmembrane segment at 59–78 (LAGLMVVAMSSIGCGWYYAS) threads the bilayer.

It belongs to the cornifelin family.

It localises to the membrane. Its function is as follows. May be involved in cadmium resistance. In Arabidopsis thaliana (Mouse-ear cress), this protein is Protein PLANT CADMIUM RESISTANCE 9 (PCR9).